A 37-amino-acid chain; its full sequence is Unknown protein 25 (37 aa).

In Pseudotsuga menziesii (Douglas-fir), this protein is Unknown protein 25.